A 92-amino-acid polypeptide reads, in one-letter code: Putative defensin-like protein 225 (92 aa).

The N-terminal stretch at 1–26 (MKYGVLFMVSCGVMFLILSHVEEVEA) is a signal peptide. 3 disulfides stabilise this stretch: cysteine 32–cysteine 92, cysteine 42–cysteine 70, and cysteine 68–cysteine 88.

Belongs to the DEFL family.

It localises to the secreted. The polypeptide is Putative defensin-like protein 225 (SCRL1) (Arabidopsis thaliana (Mouse-ear cress)).